The following is a 264-amino-acid chain: MHKLKLHGFNNLTKSLSFCIYDICYAKTADDRAGYIAYIDEQYNANRLTEILSETCSIIGANILNIARQDYEPQGASVTILVSEEPVDPNDVDTSEHPGPLSKTVVAHLDKSHICVHTYPESHPEGGLCTFRADIEVSTCGVISPLKALNYLIHQLESDIVTMDYRVRGFTRDVNGVKHYIDHEINSIQNFMSDDMKALYHMMDVNVYQENIFHTKMLLKDFDLKHYLFNAKPDALSAAERKEITDLLWKEMQEIYYGRNIPHL.

The active-site Schiff-base intermediate with substrate; via pyruvic acid is the serine 112. Position 112 is a pyruvic acid (Ser); by autocatalysis (serine 112). The Proton acceptor; for processing activity role is filled by histidine 117. Catalysis depends on cysteine 140, which acts as the Proton donor; for catalytic activity.

It belongs to the prokaryotic AdoMetDC family. Type 2 subfamily. As to quaternary structure, heterooctamer of four alpha and four beta chains arranged as a tetramer of alpha/beta heterodimers. Pyruvate serves as cofactor. Is synthesized initially as an inactive proenzyme. Formation of the active enzyme involves a self-maturation process in which the active site pyruvoyl group is generated from an internal serine residue via an autocatalytic post-translational modification. Two non-identical subunits are generated from the proenzyme in this reaction, and the pyruvate is formed at the N-terminus of the alpha chain, which is derived from the carboxyl end of the proenzyme. The post-translation cleavage follows an unusual pathway, termed non-hydrolytic serinolysis, in which the side chain hydroxyl group of the serine supplies its oxygen atom to form the C-terminus of the beta chain, while the remainder of the serine residue undergoes an oxidative deamination to produce ammonia and the pyruvoyl group blocking the N-terminus of the alpha chain.

It carries out the reaction S-adenosyl-L-methionine + H(+) = S-adenosyl 3-(methylsulfanyl)propylamine + CO2. It participates in amine and polyamine biosynthesis; S-adenosylmethioninamine biosynthesis; S-adenosylmethioninamine from S-adenosyl-L-methionine: step 1/1. Functionally, catalyzes the decarboxylation of S-adenosylmethionine to S-adenosylmethioninamine (dcAdoMet), the propylamine donor required for the synthesis of the polyamines spermine and spermidine from the diamine putrescine. The polypeptide is S-adenosylmethionine decarboxylase proenzyme (Serratia proteamaculans (strain 568)).